Consider the following 485-residue polypeptide: Glutamyl-tRNA(Gln) amidotransferase subunit A (485 aa).

Residues Lys-79 and Ser-154 each act as charge relay system in the active site. The active-site Acyl-ester intermediate is Ser-178.

Belongs to the amidase family. GatA subfamily. Heterotrimer of A, B and C subunits.

The enzyme catalyses L-glutamyl-tRNA(Gln) + L-glutamine + ATP + H2O = L-glutaminyl-tRNA(Gln) + L-glutamate + ADP + phosphate + H(+). Functionally, allows the formation of correctly charged Gln-tRNA(Gln) through the transamidation of misacylated Glu-tRNA(Gln) in organisms which lack glutaminyl-tRNA synthetase. The reaction takes place in the presence of glutamine and ATP through an activated gamma-phospho-Glu-tRNA(Gln). In Bacillus licheniformis (strain ATCC 14580 / DSM 13 / JCM 2505 / CCUG 7422 / NBRC 12200 / NCIMB 9375 / NCTC 10341 / NRRL NRS-1264 / Gibson 46), this protein is Glutamyl-tRNA(Gln) amidotransferase subunit A.